A 1487-amino-acid polypeptide reads, in one-letter code: MASQRSDFAPDLYDFIESNDFGEDPLIRAASAAEEGFTQPAAPDLLYGSQNMFGVDDAPLSTPAVVIPPPSPAPEPRGGKAKRSPSAAGSGGPPTPAAAAQPASPAPSPAPGLAAMLKMVHSSVAPGNGRRATGSSSPGGGDAADPVALDSDTETCPGSPQPEFPSSASPGGGSPAPRVRSISISSSSSSSSSMDEDDQADGAGASSSSSSSSDDSDSDEGGEEETPRPRHSQNAAKTPSAAGSPGPSSGGDRPAAGAATPKSCRSGAASPGAPAPAPASAPAPSRPGGGLLPPGARILEYLEGVREANLAKTLERPEPPAGMASPPGRSPHRLPKDQRPKSALAGASKRKRANPRPIPQTQTQAPAEEAPQTAVWDLLDMNSSQATGAAAAAASAPAAASCAPGVYQREPLLTPSGDPWPGSDPPPMGRVRYGGTGDSRDGLWDDPEIVLAASRYAEAQAPVPVFVPEMGDSTKQYNALVRMVFESREAMSWLQNSKLSGQDQNLAQFCQKFIHAPRGHGSFITGSVANPLPHIGDAMAAGNALWALPHAAASVAMSRRYDRTQKSFILQSLRRAYADMAYPRDEAGRPDSLAAVAGYPAQAAAAAASQQQPEAPAPSVRVREAYTRVCAALGPRRKAAAAAAAPGSRAPRPSAFRLRELGDACVLACQAVFEALLRLRGGASAVPGLDPSEIPSPACPPEALCSNPAGLETAALSLYELRDLVERARLLGDSDPTHRLGSDELRLAVRAVLVVARTVAPLVRYNAEGARARASAWTVTQAVFSIPSLVGGMLGEAVSLLAPPTRSQQPSSSSPGGEPFSGSAAAEGSLQTLPPLWPTVPGKQSATVPSSHSQSPQHSQSGGGAGATTATCCRATQTNARSRGQQHQPQKARSPQAAASPAHLSQEAMPGSSSDDRAIHGRPRGKSGKRRSEPLEPAAQAGASASFSSSARGYDPSGPVDSPPAPKRRVATPGHQAPRALGPMPAEGPDRRGGFRRVPRGDCHTPRPSDAACAAYCPPELVAELIDNQLFPEAWRPALTFDPQALATIAARCSGPPARDGARFGELAASGPLRRRAAWMHQIPDPEDVKVVVLYSPLQDEDLLGGLPASRPGGSRREPLWSDLKGGLSALLAALGNRILTKRSHAWAGNWTGAPDVSALNAQGVLLLSTGDLAFTGCVEYLCLRLGSARRKLLVLDAVSTEDWPQDGPAISQYHIYMRAALTPRVACAVRWPRERHLSRAVLTSSTLFGPGLFARAEAAFARLYPDSAPLRLCRSSNVAYTVDTRAGERTRVPLAPREYRQRVLPDYDGCKDMRAQAEGLGFHDPDFEEGAAQSHRAANRWGLGAWLRPVYLACGRRGAGAVEPSELLIPELLSEFCRVALLEPDAEAEPLVLPITEAPRRRAPRVDWEPGFGSRSTSVLHMGATELCLPEPDDELEIDGAGDVELVVEHPGPSPGVAQALRRAPIKIEVVSDDEDGGDWCNPYLS.

Disordered regions lie at residues 41-295, 310-370, and 803-1007; these read AAPD…LPPG, LAKT…AEEA, and PPTR…HTPR. Residues 66 to 75 show a composition bias toward pro residues; that stretch reads VIPPPSPAPE. Composition is skewed to low complexity over residues 165 to 193 and 201 to 213; these read PSSASPGGGSPAPRVRSISISSSSSSSSS and DGAGASSSSSSSS. Positions 214–224 are enriched in acidic residues; the sequence is DDSDSDEGGEE. A compositionally biased stretch (low complexity) spans 235-272; it reads AAKTPSAAGSPGPSSGGDRPAAGAATPKSCRSGAASPG. Positions 273 to 285 are enriched in pro residues; sequence APAPAPASAPAPS. 3 stretches are compositionally biased toward low complexity: residues 807-829, 849-860, and 867-877; these read SQQPSSSSPGGEPFSGSAAAEGS, PSSHSQSPQHSQ, and ATTATCCRATQ. Residues 878–893 show a composition bias toward polar residues; the sequence is TNARSRGQQHQPQKAR. A compositionally biased stretch (basic residues) spans 920 to 929; sequence HGRPRGKSGK. Low complexity predominate over residues 938 to 951; that stretch reads AAQAGASASFSSSA. The span at 988–1007 shows a compositional bias: basic and acidic residues; sequence GPDRRGGFRRVPRGDCHTPR.

This sequence belongs to the herpesviridae ICP4 family. A long stretch of serine residues may be a major site of phosphorylation.

The protein localises to the host nucleus. Its function is as follows. This IE protein is a multifunctional protein capable of migrating to the nucleus, binding to DNA, trans-activating other viral genes, and autoregulating its own synthesis. In Equus caballus (Horse), this protein is Major viral transcription factor ICP4 homolog (IE).